The sequence spans 284 residues: MKLCDFEVGLDQPFFLIAGTCVVESEQMTIDTAGRLKEICEKLNVPFIYKSSYDKANRSSGKSFRGLGMDEGLRILSEVKRQLGLPVLTDVHSIDEIEQVASVVDVLQTPAFLCRQTDFIHACARSGKPVNIKKGQFLAPHDMKNVIDKARDAAREAGLSEDRFMACERGVSFGYNNLVSDMRSLAIMRETNAPVVFDATHSVQLPGGQGTSSGGQREFVPVLARAAVATGVAGLFMETHPNPAEAKSDGPNAVPLNRMGALLETLVTLDQAVKRNPFLENDFN.

It belongs to the KdsA family.

The protein localises to the cytoplasm. It catalyses the reaction D-arabinose 5-phosphate + phosphoenolpyruvate + H2O = 3-deoxy-alpha-D-manno-2-octulosonate-8-phosphate + phosphate. The protein operates within carbohydrate biosynthesis; 3-deoxy-D-manno-octulosonate biosynthesis; 3-deoxy-D-manno-octulosonate from D-ribulose 5-phosphate: step 2/3. Its pathway is bacterial outer membrane biogenesis; lipopolysaccharide biosynthesis. This Burkholderia cenocepacia (strain ATCC BAA-245 / DSM 16553 / LMG 16656 / NCTC 13227 / J2315 / CF5610) (Burkholderia cepacia (strain J2315)) protein is 2-dehydro-3-deoxyphosphooctonate aldolase.